The following is a 142-amino-acid chain: Glia maturation factor beta (142 aa).

The residue at position 2 (serine 2) is an N-acetylserine. Residues 4-139 (SLVVCDVAED…TEEWLREKLG (136 aa)) enclose the ADF-H domain.

The protein belongs to the actin-binding proteins ADF family. GMF subfamily. Post-translationally, phosphorylated; stimulated by phorbol ester.

In terms of biological role, this protein causes differentiation of brain cells, stimulation of neural regeneration, and inhibition of proliferation of tumor cells. This Rattus norvegicus (Rat) protein is Glia maturation factor beta (Gmfb).